The primary structure comprises 641 residues: Probable ATP-dependent helicase YpvA (641 aa).

One can recognise a Helicase ATP-binding domain in the interval 29-303 (YDILPEKGFD…EFAELIEDAL (275 aa)). Position 64–71 (64–71 (AGVGTGKT)) interacts with ATP. 4 residues coordinate [4Fe-4S] cluster: Cys-133, Cys-197, Cys-200, and Cys-206. A DEGH box motif is present at residues 257-260 (DEGH).

It belongs to the helicase family. DinG subfamily. The cofactor is [4Fe-4S] cluster.

It carries out the reaction Couples ATP hydrolysis with the unwinding of duplex DNA at the replication fork by translocating in the 5'-3' direction. This creates two antiparallel DNA single strands (ssDNA). The leading ssDNA polymer is the template for DNA polymerase III holoenzyme which synthesizes a continuous strand.. The catalysed reaction is ATP + H2O = ADP + phosphate + H(+). Might be a 5'-3' DNA helicase. The sequence is that of Probable ATP-dependent helicase YpvA (ypvA) from Bacillus subtilis (strain 168).